The sequence spans 316 residues: Deoxyribonuclease-1-like 1 (316 aa).

Residues 1 to 28 (MHSSGGFQKAIHGHALLLLLLLASGAET) form the signal peptide. Catalysis depends on residues Glu-107 and His-158. Cys-197 and Cys-234 are joined by a disulfide. Asn-271 carries N-linked (GlcNAc...) asparagine glycosylation.

Belongs to the DNase I family.

The protein localises to the endoplasmic reticulum. The polypeptide is Deoxyribonuclease-1-like 1 (DNASE1L1) (Bos taurus (Bovine)).